The following is a 64-amino-acid chain: Large ribosomal subunit protein bL32 (64 aa).

Residues 1–10 show a composition bias toward basic residues; sequence MAVPKRKTTP. The interval 1-22 is disordered; the sequence is MAVPKRKTTPSKRDMRRANHDK. Over residues 11 to 22 the composition is skewed to basic and acidic residues; it reads SKRDMRRANHDK.

This sequence belongs to the bacterial ribosomal protein bL32 family.

This is Large ribosomal subunit protein bL32 from Sorangium cellulosum (strain So ce56) (Polyangium cellulosum (strain So ce56)).